Consider the following 423-residue polypeptide: Serine hydroxymethyltransferase (423 aa).

(6S)-5,6,7,8-tetrahydrofolate contacts are provided by residues Leu120 and 124 to 126; that span reads GHL. Lys229 carries the N6-(pyridoxal phosphate)lysine modification. Residue 353 to 355 coordinates (6S)-5,6,7,8-tetrahydrofolate; it reads SPF.

This sequence belongs to the SHMT family. As to quaternary structure, homodimer. Pyridoxal 5'-phosphate serves as cofactor.

It is found in the cytoplasm. The catalysed reaction is (6R)-5,10-methylene-5,6,7,8-tetrahydrofolate + glycine + H2O = (6S)-5,6,7,8-tetrahydrofolate + L-serine. It functions in the pathway one-carbon metabolism; tetrahydrofolate interconversion. The protein operates within amino-acid biosynthesis; glycine biosynthesis; glycine from L-serine: step 1/1. In terms of biological role, catalyzes the reversible interconversion of serine and glycine with tetrahydrofolate (THF) serving as the one-carbon carrier. This reaction serves as the major source of one-carbon groups required for the biosynthesis of purines, thymidylate, methionine, and other important biomolecules. Also exhibits THF-independent aldolase activity toward beta-hydroxyamino acids, producing glycine and aldehydes, via a retro-aldol mechanism. This is Serine hydroxymethyltransferase from Synechococcus sp. (strain RCC307).